Reading from the N-terminus, the 740-residue chain is Probable apyrase 7 (740 aa).

Residues 1–113 (MVFGRITELF…PSTRRKLIRA (113 aa)) are Cytoplasmic-facing. Residues 114-134 (VMIVMCLFLFAFLVYIVSMYI) traverse the membrane as a helical segment. Residues 135-581 (YTNWSRGASR…LKSYETLSMK (447 aa)) are Extracellular-facing. Residue asparagine 137 is glycosylated (N-linked (GlcNAc...) asparagine). Residue 147–157 (VVFDCGSTGTR) coordinates ATP. The N-linked (GlcNAc...) asparagine glycan is linked to asparagine 208. Glutamate 284 serves as the catalytic Proton acceptor. 309–319 (GALDLGGSSLQ) contacts ATP. N-linked (GlcNAc...) asparagine glycans are attached at residues asparagine 330, asparagine 374, asparagine 439, and asparagine 484. Residues 582–602 (INPIALISILILSLLLLLCAL) form a helical membrane-spanning segment. Over 603-740 (SRVSNCLPRF…SLADSHMLKM (138 aa)) the chain is Cytoplasmic. Residues 706–740 (FWSSPRRSQMRLQSRRSQSREDLSSSLADSHMLKM) form a disordered region. Over residues 708–721 (SSPRRSQMRLQSRR) the composition is skewed to low complexity.

The protein belongs to the GDA1/CD39 NTPase family. The cofactor is Ca(2+). As to expression, detected in mature pollen grains. Also expressed in more diverse tissues such as roots, leaves, stems, pistils and sepals. More particularly expressed in the vascular bundle.

The protein localises to the membrane. It catalyses the reaction a ribonucleoside 5'-triphosphate + 2 H2O = a ribonucleoside 5'-phosphate + 2 phosphate + 2 H(+). In terms of biological role, catalyzes the hydrolysis of phosphoanhydride bonds of nucleoside tri- and di-phosphates. Involved in the regulation of pollen and anther development. This Arabidopsis thaliana (Mouse-ear cress) protein is Probable apyrase 7 (APY7).